Here is a 254-residue protein sequence, read N- to C-terminus: Triosephosphate isomerase, cytosolic (254 aa).

Residues N10 and K12 each contribute to the substrate site. H96 acts as the Electrophile in catalysis. The active-site Proton acceptor is the E166.

This sequence belongs to the triosephosphate isomerase family. Homodimer.

It is found in the cytoplasm. It catalyses the reaction D-glyceraldehyde 3-phosphate = dihydroxyacetone phosphate. It participates in carbohydrate biosynthesis; gluconeogenesis. Its pathway is carbohydrate degradation; glycolysis; D-glyceraldehyde 3-phosphate from glycerone phosphate: step 1/1. The chain is Triosephosphate isomerase, cytosolic (TPIP1) from Petunia hybrida (Petunia).